Reading from the N-terminus, the 280-residue chain is Purine nucleoside phosphorylase (280 aa).

Phosphate contacts are provided by residues serine 15 and 55–56 (RH). Methionine 194 contacts substrate. Position 195 (threonine 195) interacts with phosphate. Substrate is bound at residue 218-220 (DLD).

It belongs to the PNP/MTAP phosphorylase family. MTAP subfamily. As to quaternary structure, homohexamer. Dimer of a homotrimer.

It carries out the reaction a purine D-ribonucleoside + phosphate = a purine nucleobase + alpha-D-ribose 1-phosphate. It functions in the pathway purine metabolism; purine nucleoside salvage. Its function is as follows. Purine nucleoside phosphorylase involved in purine salvage. The protein is Purine nucleoside phosphorylase of Streptomyces coelicolor (strain ATCC BAA-471 / A3(2) / M145).